A 170-amino-acid polypeptide reads, in one-letter code: Large ribosomal subunit protein uL11 (170 aa).

This sequence belongs to the universal ribosomal protein uL11 family. As to quaternary structure, part of the ribosomal stalk of the 50S ribosomal subunit. Interacts with L10 and the large rRNA to form the base of the stalk. L10 forms an elongated spine to which L12 dimers bind in a sequential fashion forming a multimeric L10(L12)X complex.

Forms part of the ribosomal stalk which helps the ribosome interact with GTP-bound translation factors. This is Large ribosomal subunit protein uL11 from Saccharolobus islandicus (strain Y.N.15.51 / Yellowstone #2) (Sulfolobus islandicus).